The following is a 163-amino-acid chain: Flagellar assembly factor FliW (163 aa).

The span at 136–156 shows a compositional bias: basic and acidic residues; it reads PFFETSEKKQSGLQRLERQPE. The segment at 136 to 163 is disordered; that stretch reads PFFETSEKKQSGLQRLERQPEKSVPPAG.

This sequence belongs to the FliW family. As to quaternary structure, interacts with translational regulator CsrA and flagellin(s).

Its subcellular location is the cytoplasm. In terms of biological role, acts as an anti-CsrA protein, binds CsrA and prevents it from repressing translation of its target genes, one of which is flagellin. Binds to flagellin and participates in the assembly of the flagellum. In Geotalea uraniireducens (strain Rf4) (Geobacter uraniireducens), this protein is Flagellar assembly factor FliW.